The primary structure comprises 381 residues: Probable cyclic AMP-AMP-GMP nucleotide synthase (381 aa).

Serine 53 and arginine 56 together coordinate GTP. Residues aspartate 69 and aspartate 71 contribute to the active site. Mg(2+) contacts are provided by aspartate 69 and aspartate 71. Arginine 109 contacts GTP. Aspartate 121 is an active-site residue. Mg(2+) is bound by residues aspartate 121 and aspartate 196. The GTP site is built by arginine 197, arginine 204, threonine 205, glutamine 210, and arginine 307. A disordered region spans residues 348–381 (GTKFPFPGPQGGDRSGGFTAPTQPAEPQKTGRFA).

This sequence belongs to the CD-NTase family. D02 subfamily. Mg(2+) serves as cofactor.

It carries out the reaction GTP + 2 ATP = 3',3',3'-cAAG + 3 diphosphate. Its function is as follows. Cyclic nucleotide synthase (second messenger synthase) of a CBASS antivirus system. CBASS (cyclic oligonucleotide-based antiphage signaling system) provides immunity against bacteriophage. The CD-NTase protein synthesizes cyclic nucleotides in response to infection; these serve as specific second messenger signals. The signals activate a diverse range of effectors, leading to bacterial cell death and thus abortive phage infection. Cyclic nucleotide synthase, synthesizes a tricyclic nucleotide with AMP and GMP moieties, probably 3',3',3'-cyclic AMP-AMP-GMP (3'3'3'-cAAG). Controls the activity of the associated CBASS effector protein. The chain is Probable cyclic AMP-AMP-GMP nucleotide synthase from Salmonella paratyphi B (Salmonella enterica subsp. enterica serovar Paratyphi B).